Consider the following 495-residue polypeptide: Averantin hydroxylase (495 aa).

The helical transmembrane segment at 12–32 (ILLLIVLTVLTPPSLALYRLW) threads the bilayer. 2 N-linked (GlcNAc...) asparagine glycosylation sites follow: N258 and N289. C436 serves as a coordination point for heme.

This sequence belongs to the cytochrome P450 family. Heme is required as a cofactor.

The protein resides in the membrane. It carries out the reaction (1'S)-averantin + reduced [NADPH--hemoprotein reductase] + O2 = (1'S,5'R)-5'-hydroxyaverantin + oxidized [NADPH--hemoprotein reductase] + H2O. The enzyme catalyses (1'S)-averantin + reduced [NADPH--hemoprotein reductase] + O2 = (1'S,5'S)-5'-hydroxyaverantin + oxidized [NADPH--hemoprotein reductase] + H2O + H(+). It participates in mycotoxin biosynthesis; aflatoxin biosynthesis. Averantin hydroxylase; part of the gene cluster that mediates the biosynthesis of aflatoxins, a group of polyketide-derived furanocoumarins, and part of the most toxic and carcinogenic compounds among the known mycotoxins. The four major aflatoxins produced by A.parasiticus are aflatoxin B1 (AFB1), aflatoxin B2 (AFB2), aflatoxin G1 (AFG1) and aflatoxin G2 (AFG2). Within the aflatoxin pathway, the cytochrome P450 monooxygenase aflG catalyzes the hydroxylation of AVN to 5'hydroxyaverantin (HAVN). The biosynthesis of aflatoxins begins with the norsolorinic acid synthase aflC that combines a hexanoyl starter unit produced by the fatty acid synthase aflA/aflB and 7 malonyl-CoA extender units to synthesize the precursor NOR. The second step is the conversion of NOR to averantin and requires the norsolorinic acid ketoreductase aflD, which catalyzes the dehydration of norsolorinic acid to form (1'S)-averantin. The norsolorinic acid reductases aflE and aflF may also play a role in the conversion of NOR to AVN. The cytochrome P450 monooxygenase aflG then catalyzes the hydroxylation of AVN to 5'hydroxyaverantin (HAVN). The next step is performed by the 5'-hydroxyaverantin dehydrogenase aflH that transforms HAVN to 5'-oxoaverantin (OAVN) which is further converted to averufin (AVF) by aflK that plays a dual role in the pathway, as a 5'-oxoaverantin cyclase that mediates conversion of 5'-oxoaverantin, as well as a versicolorin B synthase in a later step in the pathway. The averufin oxidase aflI catalyzes the conversion of AVF to versiconal hemiacetal acetate (VHA). VHA is then the substrate for the versiconal hemiacetal acetate esterase aflJ to yield versiconal (VAL). Versicolorin B synthase aflK then converts VAL to versicolorin B (VERB) by closing the bisfuran ring of aflatoxin which is required for DNA-binding, thus giving to aflatoxin its activity as a mutagen. Then, the activity of the versicolorin B desaturase aflL leads to versicolorin A (VERA). A branch point starts from VERB since it can also be converted to dihydrodemethylsterigmatocystin (DMDHST), probably also by aflL, VERA being a precursor for aflatoxins B1 and G1, and DMDHST for aflatoxins B2 and G2. Next, the versicolorin reductase aflM and the cytochrome P450 monooxygenase aflN are involved in conversion of VERA to demethylsterigmatocystin (DMST). AflX and aflY seem also involved in this step, through probable aflX-mediated epoxide ring-opening step following versicolorin A oxidation and aflY-mediated Baeyer-Villiger oxidation required for the formation of the xanthone ring. The methyltransferase aflO then leads to the modification of DMST to sterigmatocystin (ST), and of DMDHST to dihydrosterigmatocystin (DHST). Both ST and DHST are then substrates of the O-methyltransferase aflP to yield O-methylsterigmatocystin (OMST) and dihydro-O-methylsterigmatocystin (DHOMST), respectively. Finally OMST is converted to aflatoxins B1 and G1, and DHOMST to aflatoxins B2 and G2, via the action of several enzymes including O-methylsterigmatocystin oxidoreductase aflQ, the cytochrome P450 monooxygenase aflU, but also the NADH-dependent flavin oxidoreductase nadA which is specifically required for the synthesis of AFG1. The protein is Averantin hydroxylase of Aspergillus parasiticus (strain ATCC 56775 / NRRL 5862 / SRRC 143 / SU-1).